Consider the following 262-residue polypeptide: Ribosomal RNA small subunit methyltransferase A (262 aa).

Positions 16, 18, 43, 64, 89, and 109 each coordinate S-adenosyl-L-methionine.

The protein belongs to the class I-like SAM-binding methyltransferase superfamily. rRNA adenine N(6)-methyltransferase family. RsmA subfamily.

It localises to the cytoplasm. The catalysed reaction is adenosine(1518)/adenosine(1519) in 16S rRNA + 4 S-adenosyl-L-methionine = N(6)-dimethyladenosine(1518)/N(6)-dimethyladenosine(1519) in 16S rRNA + 4 S-adenosyl-L-homocysteine + 4 H(+). In terms of biological role, specifically dimethylates two adjacent adenosines (A1518 and A1519) in the loop of a conserved hairpin near the 3'-end of 16S rRNA in the 30S particle. May play a critical role in biogenesis of 30S subunits. The protein is Ribosomal RNA small subunit methyltransferase A of Xanthomonas axonopodis pv. citri (strain 306).